The primary structure comprises 172 residues: ATP synthase subunit b (172 aa).

Residues 12 to 32 (SLYIGDLVFYIVTFIILMLLV) traverse the membrane as a helical segment. Composition is skewed to basic and acidic residues over residues 63–74 (ESAEKMAAKRQA) and 116–131 (AQKD…LNSA). The segment at 63–131 (ESAEKMAAKR…QARRDALNSA (69 aa)) is disordered.

Belongs to the ATPase B chain family. As to quaternary structure, F-type ATPases have 2 components, F(1) - the catalytic core - and F(0) - the membrane proton channel. F(1) has five subunits: alpha(3), beta(3), gamma(1), delta(1), epsilon(1). F(0) has three main subunits: a(1), b(2) and c(10-14). The alpha and beta chains form an alternating ring which encloses part of the gamma chain. F(1) is attached to F(0) by a central stalk formed by the gamma and epsilon chains, while a peripheral stalk is formed by the delta and b chains.

It localises to the cell membrane. F(1)F(0) ATP synthase produces ATP from ADP in the presence of a proton or sodium gradient. F-type ATPases consist of two structural domains, F(1) containing the extramembraneous catalytic core and F(0) containing the membrane proton channel, linked together by a central stalk and a peripheral stalk. During catalysis, ATP synthesis in the catalytic domain of F(1) is coupled via a rotary mechanism of the central stalk subunits to proton translocation. Functionally, component of the F(0) channel, it forms part of the peripheral stalk, linking F(1) to F(0). This chain is ATP synthase subunit b, found in Limosilactobacillus reuteri (strain DSM 20016) (Lactobacillus reuteri).